A 689-amino-acid polypeptide reads, in one-letter code: Elongation factor G (689 aa).

Residues 8-282 (DKVRNIGIMA…AIVRYLPSPL (275 aa)) form the tr-type G domain. GTP is bound by residues 17–24 (AHIDAGKT), 81–85 (DTPGH), and 135–138 (NKMD).

The protein belongs to the TRAFAC class translation factor GTPase superfamily. Classic translation factor GTPase family. EF-G/EF-2 subfamily.

The protein resides in the cytoplasm. Catalyzes the GTP-dependent ribosomal translocation step during translation elongation. During this step, the ribosome changes from the pre-translocational (PRE) to the post-translocational (POST) state as the newly formed A-site-bound peptidyl-tRNA and P-site-bound deacylated tRNA move to the P and E sites, respectively. Catalyzes the coordinated movement of the two tRNA molecules, the mRNA and conformational changes in the ribosome. This Thermoanaerobacter pseudethanolicus (strain ATCC 33223 / 39E) (Clostridium thermohydrosulfuricum) protein is Elongation factor G.